Here is a 322-residue protein sequence, read N- to C-terminus: Acetyl-coenzyme A carboxylase carboxyl transferase subunit alpha (322 aa).

The CoA carboxyltransferase C-terminal domain occupies 40–297 (PLQKKLGDLR…RETLTRNLEE (258 aa)).

The protein belongs to the AccA family. Acetyl-CoA carboxylase is a heterohexamer composed of biotin carboxyl carrier protein (AccB), biotin carboxylase (AccC) and two subunits each of ACCase subunit alpha (AccA) and ACCase subunit beta (AccD).

It localises to the cytoplasm. The catalysed reaction is N(6)-carboxybiotinyl-L-lysyl-[protein] + acetyl-CoA = N(6)-biotinyl-L-lysyl-[protein] + malonyl-CoA. The protein operates within lipid metabolism; malonyl-CoA biosynthesis; malonyl-CoA from acetyl-CoA: step 1/1. Component of the acetyl coenzyme A carboxylase (ACC) complex. First, biotin carboxylase catalyzes the carboxylation of biotin on its carrier protein (BCCP) and then the CO(2) group is transferred by the carboxyltransferase to acetyl-CoA to form malonyl-CoA. The protein is Acetyl-coenzyme A carboxylase carboxyl transferase subunit alpha of Gemmatimonas aurantiaca (strain DSM 14586 / JCM 11422 / NBRC 100505 / T-27).